Here is a 666-residue protein sequence, read N- to C-terminus: Protein scarlet (666 aa).

The Cytoplasmic segment spans residues 1–417 (MSDSDSKRID…TIQWLRFIQK (417 aa)). The tract at residues 26–55 (PVGSTIEVPSLDSTPKLSKRNSSERSLPLR) is disordered. An ABC transporter domain is found at 69–316 (LVWRDLCVYT…FANHGYYCPE (248 aa)). Residue 108–115 (GSSGSGKT) coordinates ATP. A helical transmembrane segment spans residues 418–438 (IAMAFIIGACFAGTTEPSQLG). Over 439-444 (VQAVQG) the chain is Extracellular. The helical transmembrane segment at 445-465 (ALFIMISENTYHPMYSVLNLF) threads the bilayer. At 466 to 490 (PQGFPLFMRETRSGLYSTGQYYAAN) the chain is on the cytoplasmic side. Residues 491 to 511 (ILALLPGMIIEPLIFVIICYW) form a helical membrane-spanning segment. Residues 512–518 (LTGLRST) lie on the Extracellular side of the membrane. Residues 519–539 (FYAFGVTAMCVVLVMNVATAC) traverse the membrane as a helical segment. Residues 540–551 (GCFFSTAFNSVP) lie on the Cytoplasmic side of the membrane. The helical transmembrane segment at 552 to 572 (LAMAYLVPLDYIFMITSGIFI) threads the bilayer. Residues 573–639 (QVNSLPVAFW…YSFNESNVYR (67 aa)) lie on the Extracellular side of the membrane. N-linked (GlcNAc...) asparagine glycans are attached at residues Asn-607 and Asn-633. A helical transmembrane segment spans residues 640–660 (NLLAMVGLYFGFHLLGYYCLW). Topologically, residues 661–666 (RRARKL) are cytoplasmic.

This sequence belongs to the ABC transporter superfamily. ABCG family. Eye pigment precursor importer (TC 3.A.1.204) subfamily. In terms of assembly, may form a heterodimer with w/white. Expressed in the eye, specifically in primary pigment cells, secondary pigment cells and retinula cells (at protein level).

The protein resides in the cytoplasmic vesicle membrane. The catalysed reaction is L-kynurenine(out) + ATP + H2O = L-kynurenine(in) + ADP + phosphate + H(+). Functionally, ATP-dependent transporter of the ATP-binding cassette (ABC) family which transports various molecules including bioamines, neurotransmitters and metabolic intermediates. In the eye and probably in association with w/white, required for the transport of the eye brown pigment precursors, kynurenine and probably tryptophan, into pigment cell granules. In Malpighian tubules and pupal eyes, involved in kynurenine transport. Probably in association with w/white, plays a role in zinc storage granule biogenesis in Malpighian tubule principal epithelial cells. This Drosophila melanogaster (Fruit fly) protein is Protein scarlet.